A 154-amino-acid polypeptide reads, in one-letter code: SsrA-binding protein (154 aa).

A disordered region spans residues 134–154; the sequence is ETLRRRDAKREVERALKEKNR.

This sequence belongs to the SmpB family.

It localises to the cytoplasm. Its function is as follows. Required for rescue of stalled ribosomes mediated by trans-translation. Binds to transfer-messenger RNA (tmRNA), required for stable association of tmRNA with ribosomes. tmRNA and SmpB together mimic tRNA shape, replacing the anticodon stem-loop with SmpB. tmRNA is encoded by the ssrA gene; the 2 termini fold to resemble tRNA(Ala) and it encodes a 'tag peptide', a short internal open reading frame. During trans-translation Ala-aminoacylated tmRNA acts like a tRNA, entering the A-site of stalled ribosomes, displacing the stalled mRNA. The ribosome then switches to translate the ORF on the tmRNA; the nascent peptide is terminated with the 'tag peptide' encoded by the tmRNA and targeted for degradation. The ribosome is freed to recommence translation, which seems to be the essential function of trans-translation. The chain is SsrA-binding protein from Halalkalibacterium halodurans (strain ATCC BAA-125 / DSM 18197 / FERM 7344 / JCM 9153 / C-125) (Bacillus halodurans).